We begin with the raw amino-acid sequence, 360 residues long: 3-dehydroquinate synthase (360 aa).

NAD(+) contacts are provided by residues 104–108 (GVIGD), 128–129 (TT), lysine 141, and 168–171 (FLDT). The Zn(2+) site is built by glutamate 183, histidine 243, and histidine 260.

Belongs to the sugar phosphate cyclases superfamily. Dehydroquinate synthase family. The cofactor is Co(2+). Zn(2+) is required as a cofactor. NAD(+) serves as cofactor.

The protein localises to the cytoplasm. The enzyme catalyses 7-phospho-2-dehydro-3-deoxy-D-arabino-heptonate = 3-dehydroquinate + phosphate. It functions in the pathway metabolic intermediate biosynthesis; chorismate biosynthesis; chorismate from D-erythrose 4-phosphate and phosphoenolpyruvate: step 2/7. Its function is as follows. Catalyzes the conversion of 3-deoxy-D-arabino-heptulosonate 7-phosphate (DAHP) to dehydroquinate (DHQ). This chain is 3-dehydroquinate synthase, found in Streptococcus equi subsp. equi (strain 4047).